The chain runs to 277 residues: MKQLYGVIGNPIGHSLSPVMHNDAFEHLNMDAHYHAFLVKEEVLGEAVRGLKALGISGFNVTTPHKVAIMDYLDEIDPLAKQIGAVNTVVHKNGKLTGYNTDGIGFVRALQSISSEPLQEKRILLLGAGGASRAIYFSLADAGVKEIDVANRTVDKAKELIAACTATVHSVALSLEKATKEQGSYDIIIQTTTIGMHPRVEHTPLQISSLKKGTIVSDIIYNPFETKILCEAKEQGAIIQNGIDMFVYQGALAFEMWTGCVPNIERMKQLVIRKLGG.

Residues 15 to 17 (SLS) and Thr62 contribute to the shikimate site. The active-site Proton acceptor is Lys66. Shikimate contacts are provided by Asn87 and Asp102. NADP(+) is bound by residues 127-131 (GAGGA), 151-156 (NRTVDK), and Ile219. Tyr221 contacts shikimate. Gly242 serves as a coordination point for NADP(+).

The protein belongs to the shikimate dehydrogenase family. In terms of assembly, homodimer.

The catalysed reaction is shikimate + NADP(+) = 3-dehydroshikimate + NADPH + H(+). The protein operates within metabolic intermediate biosynthesis; chorismate biosynthesis; chorismate from D-erythrose 4-phosphate and phosphoenolpyruvate: step 4/7. In terms of biological role, involved in the biosynthesis of the chorismate, which leads to the biosynthesis of aromatic amino acids. Catalyzes the reversible NADPH linked reduction of 3-dehydroshikimate (DHSA) to yield shikimate (SA). This chain is Shikimate dehydrogenase (NADP(+)), found in Bacillus cereus (strain 03BB102).